Consider the following 382-residue polypeptide: MAAQRPLTIALVAGETSGDILGAGLIRALKARVPNARFVGVAGPRMQAEGCEAWYEMEELAVMGIVEVLGRLRRLLHIRADLTRRFTALKPDVFVGIDAPDFNITLEGNLKKQGIKTIHYVSPSVWAWRQKRVFKIGRSTHMVLAFLPFEKAFYDKFNVPCRFIGHTMADAMPLDPNKNTARDVLGIPHDAHCLALLPGSRGAEVEMLSADFLKTAQLLRQHYPDLEVVVPLVNAKRREQFEKIKAEIAPDLAVHLLDGMGREAMVASDAALLASGTAALECMLAKCPMVVGYRMKPFTFWLAKRLVKTEYVSLPNLLAGRELVKELLQEECEPQKLAEALLPLLANGKTSHVMHDTFRELHQQIRCNADEQAADAVLELAQ.

Belongs to the LpxB family.

The catalysed reaction is 2-N,3-O-bis[(3R)-3-hydroxytetradecanoyl]-alpha-D-glucosaminyl 1-phosphate + UDP-2-N,3-O-bis[(3R)-3-hydroxytetradecanoyl]-alpha-D-glucosamine = lipid A disaccharide (E. coli) + UDP + H(+). It carries out the reaction a lipid X + a UDP-2-N,3-O-bis[(3R)-3-hydroxyacyl]-alpha-D-glucosamine = a lipid A disaccharide + UDP + H(+). It participates in glycolipid biosynthesis; lipid IV(A) biosynthesis; lipid IV(A) from (3R)-3-hydroxytetradecanoyl-[acyl-carrier-protein] and UDP-N-acetyl-alpha-D-glucosamine: step 5/6. Its function is as follows. Condensation of UDP-2,3-diacylglucosamine and 2,3-diacylglucosamine-1-phosphate to form lipid A disaccharide, a precursor of lipid A, a phosphorylated glycolipid that anchors the lipopolysaccharide to the outer membrane of the cell. In Salmonella arizonae (strain ATCC BAA-731 / CDC346-86 / RSK2980), this protein is Lipid-A-disaccharide synthase.